Here is a 398-residue protein sequence, read N- to C-terminus: cAMP-dependent protein kinase type 3 (398 aa).

2 positions are modified to phosphoserine: Ser15 and Ser55. The 255-residue stretch at 88-342 folds into the Protein kinase domain; the sequence is FQILRTLGTG…SEDVKNHPWF (255 aa). ATP contacts are provided by residues 94–102 and Lys117; that span reads LGTGSFGRV. The Proton acceptor role is filled by Asp211. The 56-residue stretch at 343–398 folds into the AGC-kinase C-terminal domain; sequence NEVIWEKLLARYIETPYEPPIQQGQGDTSQFDRYPEEEFNYGIQGEDPYMDLMKEF.

The protein belongs to the protein kinase superfamily. AGC Ser/Thr protein kinase family. cAMP subfamily.

It carries out the reaction L-seryl-[protein] + ATP = O-phospho-L-seryl-[protein] + ADP + H(+). It catalyses the reaction L-threonyl-[protein] + ATP = O-phospho-L-threonyl-[protein] + ADP + H(+). Activated by cAMP. The polypeptide is cAMP-dependent protein kinase type 3 (TPK3) (Saccharomyces cerevisiae (strain ATCC 204508 / S288c) (Baker's yeast)).